Consider the following 296-residue polypeptide: Phosphatidylserine decarboxylase proenzyme (296 aa).

Active-site charge relay system; for autoendoproteolytic cleavage activity residues include Asp113, His169, and Ser256. The active-site Schiff-base intermediate with substrate; via pyruvic acid; for decarboxylase activity is the Ser256. At Ser256 the chain carries Pyruvic acid (Ser); by autocatalysis.

The protein belongs to the phosphatidylserine decarboxylase family. PSD-B subfamily. Prokaryotic type II sub-subfamily. In terms of assembly, heterodimer of a large membrane-associated beta subunit and a small pyruvoyl-containing alpha subunit. It depends on pyruvate as a cofactor. In terms of processing, is synthesized initially as an inactive proenzyme. Formation of the active enzyme involves a self-maturation process in which the active site pyruvoyl group is generated from an internal serine residue via an autocatalytic post-translational modification. Two non-identical subunits are generated from the proenzyme in this reaction, and the pyruvate is formed at the N-terminus of the alpha chain, which is derived from the carboxyl end of the proenzyme. The autoendoproteolytic cleavage occurs by a canonical serine protease mechanism, in which the side chain hydroxyl group of the serine supplies its oxygen atom to form the C-terminus of the beta chain, while the remainder of the serine residue undergoes an oxidative deamination to produce ammonia and the pyruvoyl prosthetic group on the alpha chain. During this reaction, the Ser that is part of the protease active site of the proenzyme becomes the pyruvoyl prosthetic group, which constitutes an essential element of the active site of the mature decarboxylase.

The protein resides in the cell membrane. It catalyses the reaction a 1,2-diacyl-sn-glycero-3-phospho-L-serine + H(+) = a 1,2-diacyl-sn-glycero-3-phosphoethanolamine + CO2. The protein operates within phospholipid metabolism; phosphatidylethanolamine biosynthesis; phosphatidylethanolamine from CDP-diacylglycerol: step 2/2. In terms of biological role, catalyzes the formation of phosphatidylethanolamine (PtdEtn) from phosphatidylserine (PtdSer). The protein is Phosphatidylserine decarboxylase proenzyme of Clostridium botulinum (strain Eklund 17B / Type B).